A 341-amino-acid chain; its full sequence is tRNA N6-adenosine threonylcarbamoyltransferase (341 aa).

The Fe cation site is built by His115 and His119. Residues 137–141 (IVSGG), Asp170, Gly183, Asp187, and Asn276 each bind substrate. Fe cation is bound at residue Asp304.

The protein belongs to the KAE1 / TsaD family. The cofactor is Fe(2+).

The protein localises to the cytoplasm. It carries out the reaction L-threonylcarbamoyladenylate + adenosine(37) in tRNA = N(6)-L-threonylcarbamoyladenosine(37) in tRNA + AMP + H(+). Functionally, required for the formation of a threonylcarbamoyl group on adenosine at position 37 (t(6)A37) in tRNAs that read codons beginning with adenine. Is involved in the transfer of the threonylcarbamoyl moiety of threonylcarbamoyl-AMP (TC-AMP) to the N6 group of A37, together with TsaE and TsaB. TsaD likely plays a direct catalytic role in this reaction. The protein is tRNA N6-adenosine threonylcarbamoyltransferase of Staphylococcus aureus (strain Mu3 / ATCC 700698).